A 564-amino-acid polypeptide reads, in one-letter code: Juvenile hormone esterase (564 aa).

The N-terminal stretch at 1–19 is a signal peptide; the sequence is MTSHVLALAFLLHACTALA. The N-linked (GlcNAc...) asparagine glycan is linked to asparagine 81. Residues cysteine 89 and cysteine 109 are joined by a disulfide bond. A glycan (N-linked (GlcNAc...) asparagine) is linked at asparagine 180. Serine 220 acts as the Acyl-ester intermediate in catalysis. Residue glutamate 351 is the Charge relay system of the active site. Asparagine 402 carries an N-linked (GlcNAc...) asparagine glycan. The active-site Charge relay system is histidine 465. The N-linked (GlcNAc...) asparagine glycan is linked to asparagine 515.

The protein belongs to the type-B carboxylesterase/lipase family.

It catalyses the reaction juvenile hormone I + H2O = juvenile hormone I carboxylate + methanol + H(+). It carries out the reaction juvenile hormone III + H2O = juvenile hormone III carboxylate + methanol + H(+). Functionally, JH esterase plays a crucial role in the decrease of JH activity in lepidopteran insects, by hydrolyzing the methyl ester of JH. It is also involved in the transport of JH. The protein is Juvenile hormone esterase of Heliothis virescens (Tobacco budworm moth).